Here is a 98-residue protein sequence, read N- to C-terminus: NADH-ubiquinone oxidoreductase chain 4L (98 aa).

3 consecutive transmembrane segments (helical) span residues Met1 to Met21, Ser29 to Leu49, and Ile61 to Val81.

The protein belongs to the complex I subunit 4L family. In terms of assembly, core subunit of respiratory chain NADH dehydrogenase (Complex I) which is composed of 45 different subunits.

The protein resides in the mitochondrion inner membrane. The enzyme catalyses a ubiquinone + NADH + 5 H(+)(in) = a ubiquinol + NAD(+) + 4 H(+)(out). Core subunit of the mitochondrial membrane respiratory chain NADH dehydrogenase (Complex I) which catalyzes electron transfer from NADH through the respiratory chain, using ubiquinone as an electron acceptor. Part of the enzyme membrane arm which is embedded in the lipid bilayer and involved in proton translocation. The chain is NADH-ubiquinone oxidoreductase chain 4L (MT-ND4L) from Rousettus aegyptiacus (Egyptian fruit bat).